A 267-amino-acid chain; its full sequence is Thiazole synthase (267 aa).

Lys107 (schiff-base intermediate with DXP) is an active-site residue. Residues Gly168, 194–195 (AG), and 216–217 (NT) contribute to the 1-deoxy-D-xylulose 5-phosphate site.

The protein belongs to the ThiG family. Homotetramer. Forms heterodimers with either ThiH or ThiS.

The protein resides in the cytoplasm. The enzyme catalyses [ThiS sulfur-carrier protein]-C-terminal-Gly-aminoethanethioate + 2-iminoacetate + 1-deoxy-D-xylulose 5-phosphate = [ThiS sulfur-carrier protein]-C-terminal Gly-Gly + 2-[(2R,5Z)-2-carboxy-4-methylthiazol-5(2H)-ylidene]ethyl phosphate + 2 H2O + H(+). It participates in cofactor biosynthesis; thiamine diphosphate biosynthesis. Its function is as follows. Catalyzes the rearrangement of 1-deoxy-D-xylulose 5-phosphate (DXP) to produce the thiazole phosphate moiety of thiamine. Sulfur is provided by the thiocarboxylate moiety of the carrier protein ThiS. In vitro, sulfur can be provided by H(2)S. The chain is Thiazole synthase from Aquifex aeolicus (strain VF5).